The chain runs to 210 residues: Ribosomal RNA large subunit methyltransferase E (210 aa).

S-adenosyl-L-methionine contacts are provided by Gly67, Trp69, Asp87, Asp103, and Asp128. Lys168 serves as the catalytic Proton acceptor.

Belongs to the class I-like SAM-binding methyltransferase superfamily. RNA methyltransferase RlmE family.

Its subcellular location is the cytoplasm. The catalysed reaction is uridine(2552) in 23S rRNA + S-adenosyl-L-methionine = 2'-O-methyluridine(2552) in 23S rRNA + S-adenosyl-L-homocysteine + H(+). Functionally, specifically methylates the uridine in position 2552 of 23S rRNA at the 2'-O position of the ribose in the fully assembled 50S ribosomal subunit. The sequence is that of Ribosomal RNA large subunit methyltransferase E from Psychrobacter arcticus (strain DSM 17307 / VKM B-2377 / 273-4).